The primary structure comprises 404 residues: Chorismate synthase (404 aa).

NADP(+) is bound at residue Arg-47. FMN-binding positions include Arg-156–Ser-158, Asn-281–Ala-282, Gly-321, Lys-336–Thr-340, and Arg-363.

Belongs to the chorismate synthase family. Homotetramer. FMNH2 is required as a cofactor.

The catalysed reaction is 5-O-(1-carboxyvinyl)-3-phosphoshikimate = chorismate + phosphate. It functions in the pathway metabolic intermediate biosynthesis; chorismate biosynthesis; chorismate from D-erythrose 4-phosphate and phosphoenolpyruvate: step 7/7. Its function is as follows. Catalyzes the anti-1,4-elimination of the C-3 phosphate and the C-6 proR hydrogen from 5-enolpyruvylshikimate-3-phosphate (EPSP) to yield chorismate, which is the branch point compound that serves as the starting substrate for the three terminal pathways of aromatic amino acid biosynthesis. This reaction introduces a second double bond into the aromatic ring system. The polypeptide is Chorismate synthase (Rhodopirellula baltica (strain DSM 10527 / NCIMB 13988 / SH1)).